We begin with the raw amino-acid sequence, 189 residues long: Cell division protein SepF (189 aa).

Residues 18–64 (EVTDHEDVAKERPVKVQKTEQTPSQQQRKPERPQETVPPRRQHIKSD) form a disordered region. The segment covering 22-35 (HEDVAKERPVKVQK) has biased composition (basic and acidic residues).

It belongs to the SepF family. In terms of assembly, homodimer. Interacts with FtsZ.

It localises to the cytoplasm. Its function is as follows. Cell division protein that is part of the divisome complex and is recruited early to the Z-ring. Probably stimulates Z-ring formation, perhaps through the cross-linking of FtsZ protofilaments. Its function overlaps with FtsA. This is Cell division protein SepF from Streptococcus thermophilus (strain ATCC BAA-250 / LMG 18311).